Reading from the N-terminus, the 308-residue chain is Elongation factor Ts (308 aa).

Positions 80–83 (TDFV) are involved in Mg(2+) ion dislocation from EF-Tu.

It belongs to the EF-Ts family.

The protein localises to the cytoplasm. Its function is as follows. Associates with the EF-Tu.GDP complex and induces the exchange of GDP to GTP. It remains bound to the aminoacyl-tRNA.EF-Tu.GTP complex up to the GTP hydrolysis stage on the ribosome. This chain is Elongation factor Ts, found in Verminephrobacter eiseniae (strain EF01-2).